The chain runs to 367 residues: tRNA-dihydrouridine(20a/20b) synthase [NAD(P)+] (367 aa).

FMN-binding positions include 45-47 and Gln-99; that span reads PMV. Cys-128 (proton donor) is an active-site residue. Residues Lys-169, His-197, 231 to 233, and 255 to 256 contribute to the FMN site; these read NGD and VR.

The protein belongs to the Dus family. Dus4 subfamily. FMN is required as a cofactor.

The catalysed reaction is 5,6-dihydrouridine(20a) in tRNA + NADP(+) = uridine(20a) in tRNA + NADPH + H(+). It carries out the reaction 5,6-dihydrouridine(20a) in tRNA + NAD(+) = uridine(20a) in tRNA + NADH + H(+). It catalyses the reaction 5,6-dihydrouridine(20b) in tRNA + NAD(+) = uridine(20b) in tRNA + NADH + H(+). The enzyme catalyses 5,6-dihydrouridine(20b) in tRNA + NADP(+) = uridine(20b) in tRNA + NADPH + H(+). The catalysed reaction is a 5,6-dihydrouridine in mRNA + NAD(+) = a uridine in mRNA + NADH + H(+). It carries out the reaction a 5,6-dihydrouridine in mRNA + NADP(+) = a uridine in mRNA + NADPH + H(+). Functionally, catalyzes the synthesis of dihydrouridine, a modified base found in the D-loop of most tRNAs. Specifically modifies U20a and U20b in cytoplasmic tRNAs. Also able to mediate dihydrouridylation of some mRNAs, thereby affecting their translation. The polypeptide is tRNA-dihydrouridine(20a/20b) synthase [NAD(P)+] (Saccharomyces cerevisiae (strain ATCC 204508 / S288c) (Baker's yeast)).